Consider the following 194-residue polypeptide: Translation machinery-associated protein 22 (194 aa).

One can recognise an SUI1 domain in the interval 102 to 173 (VQIKRVERNK…DVQDWLLEVY (72 aa)).

The protein belongs to the DENR family. In terms of assembly, interacts with the 40S ribosomal subunit.

The protein localises to the cytoplasm. The polypeptide is Translation machinery-associated protein 22 (tma22) (Aspergillus oryzae (strain ATCC 42149 / RIB 40) (Yellow koji mold)).